The following is an 855-amino-acid chain: Envelope glycoprotein gp150 (855 aa).

Residues 1–784 (MAEGFAANRQ…WIGNIPQYLK (784 aa)) lie on the Extracellular side of the membrane. N-linked (GlcNAc...) asparagine; by host glycosylation is found at Asn-220, Asn-258, Asn-269, Asn-274, Asn-298, Asn-336, Asn-418, Asn-422, Asn-448, Asn-469, Asn-481, Asn-499, Asn-518, Asn-531, Asn-548, and Asn-551. A fusion peptide region spans residues 615 to 635 (VMLALATVLSMAGAGTGATAI). Residues 642–692 (HQVLATHQETIEKVTEALKINNLRLVTLEHQVLVIGLKVEAMEKFLYTAFA) are a coiled coil. Positions 661-679 (INNLRLVTLEHQVLVIGLK) are immunosuppression. Residues Asn-716, Asn-720, Asn-728, and Asn-736 are each glycosylated (N-linked (GlcNAc...) asparagine; by host). A coiled-coil region spans residues 735-771 (YNQTKELQQKFYEIIMNIEQNNVQVKKGLQQLQEWED). Residues 785–805 (GLLGGILGIGIGVLLLILCLP) form a helical membrane-spanning segment. The Cytoplasmic portion of the chain corresponds to 806–855 (TLVDCIRNCISKVLGYTVIAMPEIGDEEETVQMELRKNGRQCGMSEKEEE).

As to quaternary structure, the mature envelope protein (Env) consists of a trimer of SU-TM heterodimers attached by noncovalent interactions or by a labile interchain disulfide bond. Post-translationally, specific enzymatic cleavages in vivo yield mature proteins. Envelope glycoproteins are synthesized as an inactive precursor that is N-glycosylated and processed likely by host cell furin or by a furin-like protease in the Golgi to yield the mature SU and TM proteins. The cleavage site between SU and TM requires the minimal sequence [KR]-X-[KR]-R.

It localises to the virion membrane. It is found in the host cell membrane. In terms of biological role, the surface protein (SU) attaches the virus to the host cell by binding to its receptor. This interaction triggers the refolding of the transmembrane protein (TM) and is thought to activate its fusogenic potential by unmasking its fusion peptide. Fusion occurs at the host cell plasma membrane. The transmembrane protein (TM) acts as a class I viral fusion protein. Under the current model, the protein has at least 3 conformational states: pre-fusion native state, pre-hairpin intermediate state, and post-fusion hairpin state. During viral and target cell membrane fusion, the coiled coil regions (heptad repeats) assume a trimer-of-hairpins structure, positioning the fusion peptide in close proximity to the C-terminal region of the ectodomain. The formation of this structure appears to drive apposition and subsequent fusion of viral and target cell membranes. Membranes fusion leads to delivery of the nucleocapsid into the cytoplasm. In Felidae (cat family), this protein is Envelope glycoprotein gp150 (env).